Consider the following 174-residue polypeptide: NADH-ubiquinone oxidoreductase chain 6 (174 aa).

4 consecutive transmembrane segments (helical) span residues 24 to 44 (LAMG…TGLM), 48 to 68 (FWFS…LFIY), 82 to 102 (MKLT…NILL), and 143 to 163 (LMTI…VKIT).

This sequence belongs to the complex I subunit 6 family.

Its subcellular location is the mitochondrion membrane. It catalyses the reaction a ubiquinone + NADH + 5 H(+)(in) = a ubiquinol + NAD(+) + 4 H(+)(out). Its function is as follows. Core subunit of the mitochondrial membrane respiratory chain NADH dehydrogenase (Complex I) that is believed to belong to the minimal assembly required for catalysis. Complex I functions in the transfer of electrons from NADH to the respiratory chain. The immediate electron acceptor for the enzyme is believed to be ubiquinone. The sequence is that of NADH-ubiquinone oxidoreductase chain 6 (ND6) from Ceratitis capitata (Mediterranean fruit fly).